The primary structure comprises 160 residues: Nucleotide-binding protein VC_1508 (160 aa).

Belongs to the YajQ family.

Its function is as follows. Nucleotide-binding protein. This chain is Nucleotide-binding protein VC_1508, found in Vibrio cholerae serotype O1 (strain ATCC 39315 / El Tor Inaba N16961).